A 372-amino-acid chain; its full sequence is sn-glycerol-3-phosphate import ATP-binding protein UgpC (372 aa).

An ABC transporter domain is found at 2–233; the sequence is LDIQQLVKTY…PASTFVASFI (232 aa). ATP is bound at residue 35-42; it reads GPSGCGKS.

The protein belongs to the ABC transporter superfamily. sn-glycerol-3-phosphate importer (TC 3.A.1.1.3) family. The complex is composed of two ATP-binding proteins (UgpC), two transmembrane proteins (UgpA and UgpE) and a solute-binding protein (UgpB).

The protein resides in the cell inner membrane. The enzyme catalyses sn-glycerol 3-phosphate(out) + ATP + H2O = sn-glycerol 3-phosphate(in) + ADP + phosphate + H(+). Functionally, part of the ABC transporter complex UgpBAEC involved in sn-glycerol-3-phosphate (G3P) import. Responsible for energy coupling to the transport system. In Vibrio vulnificus (strain CMCP6), this protein is sn-glycerol-3-phosphate import ATP-binding protein UgpC.